The following is a 445-amino-acid chain: Exodeoxyribonuclease 7 large subunit (445 aa).

This sequence belongs to the XseA family. As to quaternary structure, heterooligomer composed of large and small subunits.

The protein resides in the cytoplasm. The enzyme catalyses Exonucleolytic cleavage in either 5'- to 3'- or 3'- to 5'-direction to yield nucleoside 5'-phosphates.. Its function is as follows. Bidirectionally degrades single-stranded DNA into large acid-insoluble oligonucleotides, which are then degraded further into small acid-soluble oligonucleotides. In Staphylococcus epidermidis (strain ATCC 12228 / FDA PCI 1200), this protein is Exodeoxyribonuclease 7 large subunit.